A 120-amino-acid chain; its full sequence is UPF0231 protein YacL (120 aa).

This sequence belongs to the UPF0231 family.

The polypeptide is UPF0231 protein YacL (Escherichia coli O6:K15:H31 (strain 536 / UPEC)).